The sequence spans 471 residues: Tyrosine--tRNA ligase, mitochondrial (471 aa).

L-tyrosine is bound at residue Tyr-71. Asp-75 serves as a coordination point for ATP. A 'HIGH' region motif is present at residues 76–85 (PTGDSLHVGH). Residues Asp-115, Tyr-215, Gln-219, Asp-222, and Gln-241 each coordinate L-tyrosine. ATP is bound by residues Ile-268 and Lys-278. Positions 275–279 (KLGKS) match the 'KMSKS' region motif. N6-acetyllysine is present on residues Lys-349 and Lys-361.

Belongs to the class-I aminoacyl-tRNA synthetase family. As to quaternary structure, homodimer.

It localises to the mitochondrion matrix. It catalyses the reaction tRNA(Tyr) + L-tyrosine + ATP = L-tyrosyl-tRNA(Tyr) + AMP + diphosphate + H(+). Catalyzes the attachment of tyrosine to tRNA(Tyr) in a two-step reaction: tyrosine is first activated by ATP to form Tyr-AMP and then transferred to the acceptor end of tRNA(Tyr). The polypeptide is Tyrosine--tRNA ligase, mitochondrial (Yars2) (Rattus norvegicus (Rat)).